A 78-amino-acid polypeptide reads, in one-letter code: Serine--glyoxylate aminotransferase (78 aa).

Belongs to the class-V pyridoxal-phosphate-dependent aminotransferase family. In terms of assembly, homodimer. Pyridoxal 5'-phosphate serves as cofactor. In terms of tissue distribution, expressed in leaves but not in root tissue or seedlings.

It localises to the peroxisome. It catalyses the reaction glyoxylate + L-serine = 3-hydroxypyruvate + glycine. The catalysed reaction is glyoxylate + L-alanine = glycine + pyruvate. Inhibited by aminooxyacetate. The protein is Serine--glyoxylate aminotransferase of Triticum aestivum (Wheat).